A 276-amino-acid chain; its full sequence is D-aminoacyl-tRNA deacylase (276 aa).

It belongs to the DtdA deacylase family. Monomer. It depends on Zn(2+) as a cofactor.

It catalyses the reaction a D-aminoacyl-tRNA + H2O = a tRNA + a D-alpha-amino acid + H(+). It carries out the reaction glycyl-tRNA(Ala) + H2O = tRNA(Ala) + glycine + H(+). In terms of biological role, D-aminoacyl-tRNA deacylase with broad substrate specificity. By recycling D-aminoacyl-tRNA to D-amino acids and free tRNA molecules, this enzyme counteracts the toxicity associated with the formation of D-aminoacyl-tRNA entities in vivo. The protein is D-aminoacyl-tRNA deacylase of Staphylothermus marinus (strain ATCC 43588 / DSM 3639 / JCM 9404 / F1).